A 345-amino-acid chain; its full sequence is Mannonate dehydratase 2 (345 aa).

It belongs to the mannonate dehydratase family. The cofactor is Fe(2+). Mn(2+) serves as cofactor.

It catalyses the reaction D-mannonate = 2-dehydro-3-deoxy-D-gluconate + H2O. It functions in the pathway carbohydrate metabolism; pentose and glucuronate interconversion. Catalyzes the dehydration of D-mannonate. In Halalkalibacterium halodurans (strain ATCC BAA-125 / DSM 18197 / FERM 7344 / JCM 9153 / C-125) (Bacillus halodurans), this protein is Mannonate dehydratase 2 (uxuA2).